The sequence spans 159 residues: UPF0262 protein PHZ_c2197 (159 aa).

The protein belongs to the UPF0262 family.

This Phenylobacterium zucineum (strain HLK1) protein is UPF0262 protein PHZ_c2197.